A 347-amino-acid polypeptide reads, in one-letter code: Selenide, water dikinase (347 aa).

Cysteine 17 is an active-site residue. ATP is bound by residues lysine 20 and 48–50 (TRD). Aspartate 51 lines the Mg(2+) pocket. Residues aspartate 68, aspartate 91, and 139-141 (GHS) each bind ATP. Aspartate 91 provides a ligand contact to Mg(2+). Residue aspartate 227 participates in Mg(2+) binding.

It belongs to the selenophosphate synthase 1 family. Class I subfamily. As to quaternary structure, homodimer. Mg(2+) is required as a cofactor.

It carries out the reaction hydrogenselenide + ATP + H2O = selenophosphate + AMP + phosphate + 2 H(+). Synthesizes selenophosphate from selenide and ATP. This is Selenide, water dikinase from Cronobacter sakazakii (strain ATCC BAA-894) (Enterobacter sakazakii).